The chain runs to 308 residues: Glutamyl-Q tRNA(Asp) synthetase (308 aa).

L-glutamate is bound by residues 19–23 and Glu-55; that span reads RFAPS. The short motif at 22–32 is the 'HIGH' region element; the sequence is PSPSGELHFGS. Zn(2+) is bound by residues Cys-111, Cys-113, Tyr-125, and Cys-129. L-glutamate contacts are provided by Tyr-182 and Arg-200. The 'KMSKS' region signature appears at 238–242; it reads KLSKQ. ATP is bound at residue Lys-241.

This sequence belongs to the class-I aminoacyl-tRNA synthetase family. GluQ subfamily. Requires Zn(2+) as cofactor.

In terms of biological role, catalyzes the tRNA-independent activation of glutamate in presence of ATP and the subsequent transfer of glutamate onto a tRNA(Asp). Glutamate is transferred on the 2-amino-5-(4,5-dihydroxy-2-cyclopenten-1-yl) moiety of the queuosine in the wobble position of the QUC anticodon. The protein is Glutamyl-Q tRNA(Asp) synthetase of Escherichia coli O6:H1 (strain CFT073 / ATCC 700928 / UPEC).